The following is a 317-amino-acid chain: Probable RuBisCO transcriptional regulator (317 aa).

The HTH lysR-type domain maps to 6–63; the sequence is FTLDQLRILKAIAKEGSFKKAANSLYVSQPAISLQIQNLERQLNVALFERGNKKATLT. The segment at residues 23–42 is a DNA-binding region (H-T-H motif); sequence FKKAANSLYVSQPAISLQIQ.

This sequence belongs to the LysR transcriptional regulatory family.

The protein localises to the plastid. It localises to the chloroplast. Its function is as follows. Trans-acting transcriptional regulator of RuBisCO genes (rbcL and rbcS) expression. The chain is Probable RuBisCO transcriptional regulator (rbcR) from Porphyra purpurea (Red seaweed).